The sequence spans 197 residues: Cyclin-dependent kinase inhibitor 1B (197 aa).

Residues methionine 1–proline 11 are compositionally biased toward polar residues. A disordered region spans residues methionine 1–glycine 34. Serine 10 is modified (phosphoserine; by UHMK1). A compositionally biased stretch (basic and acidic residues) spans glutamate 14–lysine 25. The interaction with CDK2 stretch occupies residues aspartate 51–proline 91. Residue tyrosine 74 is modified to Phosphotyrosine; by SRC. Residues glutamate 86 to threonine 197 form a disordered region. Position 88 is a phosphotyrosine; by ABL, LYN, SRC and JAK2 (tyrosine 88). At tyrosine 89 the chain carries Phosphotyrosine. A compositionally biased stretch (polar residues) spans glutamine 104–arginine 113. Positions lysine 153–arginine 169 match the Nuclear localization signal motif. Phosphothreonine; by CaMK1 is present on threonine 170. Positions serine 175–glutamine 186 are enriched in polar residues. Position 187 is a phosphothreonine; by PKB/AKT1, CDK1 and CDK2 (threonine 187). Threonine 197 carries the post-translational modification Phosphothreonine; by CaMK1, PKB/AKT1, RPS6KA1, RPS6KA3 and PIM1.

It belongs to the CDI family. In terms of assembly, forms a ternary complex composed of CCNE1, CDK2 and CDKN1B. Interacts directly with CCNE1; the interaction is inhibited by CDK2-dependent phosphorylation on Thr-187. Interacts with COPS5, subunit of the COP9 signalosome complex; the interaction leads to CDKN1B degradation. Interacts with NUP50; the interaction leads to nuclear import and degradation of phosphorylated CDKN1B. Interacts with CCND1 and SNX6. Interacts (Thr-197-phosphorylated form) with 14-3-3 proteins, binds strongly YWHAQ, weakly YWHAE and YWHAH, but not YWHAB nor YWHAZ; the interaction with YWHAQ results in translocation to the cytoplasm. Interacts with AKT1 and LYN; the interactions lead to cytoplasmic mislocation, phosphorylation of CDKN1B and inhibition of cell cycle arrest. Forms a ternary complex with CCNA2 and CDK2; CDKN1B inhibits the kinase activity of CDK2 through conformational rearrangements. Interacts (unphosphorylated form) with CDK2. Forms a complex with CDK2 and SPDYA, but does not directly interact with SPDYA. Forms a ternary complex composed of cyclin D, CDK4 and CDKN1B. Interacts (phosphorylated on Tyr-88 and Tyr-89) with CDK4; the interaction is required for cyclin D and CDK4 complex assembly, induces nuclear translocation and activates the CDK4 kinase activity. Interacts with GRB2. Interacts with PIM1. Identified in a complex with SKP1, SKP2 and CKS1B. Interacts with UHMK1; the interaction leads to cytoplasmic mislocation, phosphorylation of CDKN1B and inhibition of cell cycle arrest. Also interacts with CDK1. Dephosphorylated on Thr-187 by PPM1H, leading to CDKN1B stability. Post-translationally, phosphorylated; phosphorylation occurs on serine, threonine and tyrosine residues. Phosphorylation on Ser-10 is the major site of phosphorylation in resting cells, takes place at the G(0)-G(1) phase and leads to protein stability. Phosphorylation on other sites is greatly enhanced by mitogens, growth factors, MYC and in certain cancer cell lines. The phosphorylated form found in the cytoplasm is inactivate. Phosphorylation on Thr-197 is required for interaction with 14-3-3 proteins. Phosphorylation on Thr-187, by CDK1 and CDK2 leads to protein ubiquitination and proteasomal degradation. Tyrosine phosphorylation promotes this process. Phosphorylation by PKB/AKT1 can be suppressed by LY294002, an inhibitor of the catalytic subunit of PI3K. Phosphorylation on Tyr-88 and Tyr-89 has no effect on binding CDK2, but is required for binding CDK4. Dephosphorylated on tyrosine residues by G-CSF. Dephosphorylated on Thr-187 by PPM1H, leading to CDKN1B stability. In terms of processing, ubiquitinated; in the cytoplasm by the KPC complex (composed of RNF123/KPC1 and UBAC1/KPC2) and, in the nucleus, by SCF(SKP2). The latter requires prior phosphorylation on Thr-187. Ubiquitinated; by a TRIM21-containing SCF(SKP2)-like complex; leads to its degradation. Subject to degradation in the lysosome. Interaction with SNX6 promotes lysosomal degradation.

It is found in the nucleus. Its subcellular location is the cytoplasm. The protein resides in the endosome. Important regulator of cell cycle progression. Inhibits the kinase activity of CDK2 bound to cyclin A, but has little inhibitory activity on CDK2 bound to SPDYA. Involved in G1 arrest. Potent inhibitor of cyclin E- and cyclin A-CDK2 complexes. Forms a complex with cyclin type D-CDK4 complexes and is involved in the assembly, stability, and modulation of CCND1-CDK4 complex activation. Acts either as an inhibitor or an activator of cyclin type D-CDK4 complexes depending on its phosphorylation state and/or stoichometry. The polypeptide is Cyclin-dependent kinase inhibitor 1B (Cdkn1b) (Mus musculus (Mouse)).